A 312-amino-acid chain; its full sequence is Serpentine receptor class gamma-31 (312 aa).

7 helical membrane-spanning segments follow: residues 6–26, 38–58, 92–112, 132–152, 180–200, 218–238, and 259–279; these read LITQ…TVVF, FLKL…NFYI, FIFC…LTSI, TYIL…PLLV, FILV…IICW, LFLV…IAML, and LLSP…LIIF.

It belongs to the nematode receptor-like protein srg family.

It localises to the membrane. This is Serpentine receptor class gamma-31 (srg-31) from Caenorhabditis elegans.